Here is a 379-residue protein sequence, read N- to C-terminus: Elongation factor Ts, mitochondrial (379 aa).

Residues 1–33 (MAWGQGAKRSILGLLFRSQHQTARAYSSSAFQT) constitute a mitochondrion transit peptide.

Belongs to the EF-Ts family.

Its subcellular location is the mitochondrion. Functionally, associates with the EF-Tu.GDP complex and induces the exchange of GDP to GTP. It remains bound to the aminoacyl-tRNA.EF-Tu.GTP complex up to the GTP hydrolysis stage on the ribosome. The chain is Elongation factor Ts, mitochondrial from Zea mays (Maize).